A 211-amino-acid polypeptide reads, in one-letter code: Endo-1,4-beta-xylanase 4 (211 aa).

Residues 1-16 form the signal peptide; the sequence is MKVTAAFAGLLVTAFA. The 192-residue stretch at 19–210 folds into the GH11 domain; it reads VPEPVLVSRS…GACSASVTIS (192 aa). A glycan (N-linked (GlcNAc...) asparagine) is linked at Asn-101. Residue Glu-106 is the Nucleophile of the active site. Glu-197 serves as the catalytic Proton donor.

This sequence belongs to the glycosyl hydrolase 11 (cellulase G) family.

It localises to the secreted. The enzyme catalyses Endohydrolysis of (1-&gt;4)-beta-D-xylosidic linkages in xylans.. It functions in the pathway glycan degradation; xylan degradation. Endo-1,4-beta-xylanase involved in the hydrolysis of xylan, a major structural heterogeneous polysaccharide found in plant biomass representing the second most abundant polysaccharide in the biosphere, after cellulose. The sequence is that of Endo-1,4-beta-xylanase 4 (XYN4) from Aspergillus niger.